The primary structure comprises 159 residues: 2-C-methyl-D-erythritol 2,4-cyclodiphosphate synthase (159 aa).

The a divalent metal cation site is built by Asp10 and His12. 4-CDP-2-C-methyl-D-erythritol 2-phosphate is bound by residues 10–12 and 37–38; these read DVH and HS. His45 contacts a divalent metal cation. Residues 59-61, 64-68, 103-109, 135-138, Phe142, and Arg145 contribute to the 4-CDP-2-C-methyl-D-erythritol 2-phosphate site; these read DIG, FLDTD, AQAPKML, and TTTE.

The protein belongs to the IspF family. Homotrimer. It depends on a divalent metal cation as a cofactor.

The catalysed reaction is 4-CDP-2-C-methyl-D-erythritol 2-phosphate = 2-C-methyl-D-erythritol 2,4-cyclic diphosphate + CMP. It functions in the pathway isoprenoid biosynthesis; isopentenyl diphosphate biosynthesis via DXP pathway; isopentenyl diphosphate from 1-deoxy-D-xylulose 5-phosphate: step 4/6. Involved in the biosynthesis of isopentenyl diphosphate (IPP) and dimethylallyl diphosphate (DMAPP), two major building blocks of isoprenoid compounds. Catalyzes the conversion of 4-diphosphocytidyl-2-C-methyl-D-erythritol 2-phosphate (CDP-ME2P) to 2-C-methyl-D-erythritol 2,4-cyclodiphosphate (ME-CPP) with a corresponding release of cytidine 5-monophosphate (CMP). In Francisella tularensis subsp. holarctica (strain OSU18), this protein is 2-C-methyl-D-erythritol 2,4-cyclodiphosphate synthase.